A 550-amino-acid polypeptide reads, in one-letter code: MPQLNSGGGDELGANDELIRFKDEGEQEEKSPGEGSAEDLADVKSSLVNESENHSSDSDSEVERRPPPRETFEKPRDYLSEAFRRQQDAAFFKGPPYAGYPFLMIPDLGGITCPMVPSHPASRAYLQMKWPLLDSPSTAGLKDARSPSPAHLSNKVPVVQHPHHMHPLTPLITYSNEHFSPGTPPGHLSPEIDPKTGIPRPPHPSELSPYYPLSPGAVGQIPHRLGWLVPQQGQPMYSIPPGGFRHPYPALAMNASMSSLVSSRFSPHMVPPPHHSLHTSGIPHPAIVSPIVKQEPSSGNISPNLSRKSNVVVKKEEEKKPHIKKPLNAFMLYMKEMRAKVVAECTLKESAAINQILGRRWHSLSREEQAKYYELARKERQLHSQLYPSWSARDNYGKKKKRKREKQSPEMENYTKTKKMCVQHFPSDKSCDSPASSHGSMLDSPATPSAALASPAAPAATHSEQAQPLSLTTKPEARALSHSAAFLASKSPSSSSLSGHLPSPVGASLLSRPIPLTSSILSPPGVFPSALQALPLLQAQPLSLVTRSSD.

Positions 1-11 are enriched in gly residues; the sequence is MPQLNSGGGDE. The segment at 1–60 is interaction with CTNNB1-A; that stretch reads MPQLNSGGGDELGANDELIRFKDEGEQEEKSPGEGSAEDLADVKSSLVNESENHSSDSDS. 3 disordered regions span residues 1-76, 182-206, and 390-473; these read MPQL…EKPR, GTPP…HPSE, and WSAR…SLTT. Composition is skewed to basic and acidic residues over residues 17 to 32 and 51 to 76; these read ELIR…EKSP and SENH…EKPR. Residues 108–311 are interaction with AES and TLE4-A; sequence LGGITCPMVP…SPNLSRKSNV (204 aa). The segment at residues 323–391 is a DNA-binding region (HMG box); the sequence is IKKPLNAFML…LHSQLYPSWS (69 aa). Over residues 406–415 the composition is skewed to basic and acidic residues; the sequence is KQSPEMENYT. Positions 407–550 are interaction with CTBP-B; that stretch reads QSPEMENYTK…PLSLVTRSSD (144 aa). Residues 444-463 are compositionally biased toward low complexity; that stretch reads SPATPSAALASPAAPAATHS. Over residues 464 to 473 the composition is skewed to polar residues; the sequence is EQAQPLSLTT.

This sequence belongs to the TCF/LEF family. In terms of assembly, interacts with csnk1e, ctnnb1-A, ctbp-B, dact1-A and gsk3b. May interact with ase and tle4-A. Phosphorylated. Phosphorylation by csnk1e promotes binding to ctnnb1-A while phosphorylation by gsk3b may reverse this effect.

Its subcellular location is the nucleus. Its function is as follows. Participates in the Wnt signaling pathway. Binds to DNA and acts as a repressor in the absence of ctnnb1-A and possibly ctnnb1-B, and as an activator in the presence of these proteins. Required early in development for the establishment of the dorsal body axis in response to maternal Wnt signaling. The chain is Transcription factor 7-like 1-C (tcf7l1-c) from Xenopus laevis (African clawed frog).